A 175-amino-acid chain; its full sequence is Ribosome maturation factor RimM (175 aa).

The PRC barrel domain maps to 100-173 (EGEYYFHEII…IIIIRPMEGL (74 aa)).

This sequence belongs to the RimM family. As to quaternary structure, binds ribosomal protein uS19.

The protein resides in the cytoplasm. Its function is as follows. An accessory protein needed during the final step in the assembly of 30S ribosomal subunit, possibly for assembly of the head region. Essential for efficient processing of 16S rRNA. May be needed both before and after RbfA during the maturation of 16S rRNA. It has affinity for free ribosomal 30S subunits but not for 70S ribosomes. The sequence is that of Ribosome maturation factor RimM from Geobacillus thermodenitrificans (strain NG80-2).